We begin with the raw amino-acid sequence, 227 residues long: Cytochrome c oxidase subunit 2 (227 aa).

Residues 1–14 (MAYPMQLGFQDATS) lie on the Mitochondrial intermembrane side of the membrane. Residues 15–45 (PIMEELLHFHDHTLMIVFLISSLVLYIISLM) traverse the membrane as a helical segment. Over 46 to 59 (LTTKLTHTSTMDAQ) the chain is Mitochondrial matrix. A helical membrane pass occupies residues 60 to 87 (EVETVWTILPAIILILIALPSLRILYMM). Over 88-227 (DEINNPSLTV…HFEEWSASMS (140 aa)) the chain is Mitochondrial intermembrane. Residues histidine 161, cysteine 196, glutamate 198, cysteine 200, histidine 204, and methionine 207 each contribute to the Cu cation site. Glutamate 198 contacts Mg(2+).

The protein belongs to the cytochrome c oxidase subunit 2 family. As to quaternary structure, component of the cytochrome c oxidase (complex IV, CIV), a multisubunit enzyme composed of 14 subunits. The complex is composed of a catalytic core of 3 subunits MT-CO1, MT-CO2 and MT-CO3, encoded in the mitochondrial DNA, and 11 supernumerary subunits COX4I, COX5A, COX5B, COX6A, COX6B, COX6C, COX7A, COX7B, COX7C, COX8 and NDUFA4, which are encoded in the nuclear genome. The complex exists as a monomer or a dimer and forms supercomplexes (SCs) in the inner mitochondrial membrane with NADH-ubiquinone oxidoreductase (complex I, CI) and ubiquinol-cytochrome c oxidoreductase (cytochrome b-c1 complex, complex III, CIII), resulting in different assemblies (supercomplex SCI(1)III(2)IV(1) and megacomplex MCI(2)III(2)IV(2)). Found in a complex with TMEM177, COA6, COX18, COX20, SCO1 and SCO2. Interacts with TMEM177 in a COX20-dependent manner. Interacts with COX20. Interacts with COX16. Requires Cu cation as cofactor.

Its subcellular location is the mitochondrion inner membrane. It carries out the reaction 4 Fe(II)-[cytochrome c] + O2 + 8 H(+)(in) = 4 Fe(III)-[cytochrome c] + 2 H2O + 4 H(+)(out). In terms of biological role, component of the cytochrome c oxidase, the last enzyme in the mitochondrial electron transport chain which drives oxidative phosphorylation. The respiratory chain contains 3 multisubunit complexes succinate dehydrogenase (complex II, CII), ubiquinol-cytochrome c oxidoreductase (cytochrome b-c1 complex, complex III, CIII) and cytochrome c oxidase (complex IV, CIV), that cooperate to transfer electrons derived from NADH and succinate to molecular oxygen, creating an electrochemical gradient over the inner membrane that drives transmembrane transport and the ATP synthase. Cytochrome c oxidase is the component of the respiratory chain that catalyzes the reduction of oxygen to water. Electrons originating from reduced cytochrome c in the intermembrane space (IMS) are transferred via the dinuclear copper A center (CU(A)) of subunit 2 and heme A of subunit 1 to the active site in subunit 1, a binuclear center (BNC) formed by heme A3 and copper B (CU(B)). The BNC reduces molecular oxygen to 2 water molecules using 4 electrons from cytochrome c in the IMS and 4 protons from the mitochondrial matrix. The polypeptide is Cytochrome c oxidase subunit 2 (MT-CO2) (Antilocapra americana (Pronghorn)).